The sequence spans 312 residues: Olfactory receptor 6B2 (312 aa).

The Extracellular portion of the chain corresponds to 1–25; that stretch reads MSGENVTKVSTFILVGLPTAPGLQY. An N-linked (GlcNAc...) asparagine glycan is attached at Asn5. The helical transmembrane segment at 26 to 46 threads the bilayer; it reads LLFLLFLLTYLFVLVENLAII. Residues 47–54 are Cytoplasmic-facing; that stretch reads LIVWSSTS. A helical transmembrane segment spans residues 55-75; that stretch reads LHRPMYYFLSSMSFLEIWYVS. At 76 to 99 the chain is on the extracellular side; it reads DITPKMLEGFLLQQKRISFVGCMT. Cys97 and Cys189 are oxidised to a cystine. The chain crosses the membrane as a helical span at residues 100-120; it reads QLYFFSSLVCTECVLLASMAY. The Cytoplasmic portion of the chain corresponds to 121–139; it reads DRYVAICHPLRYHVLVTPG. A helical transmembrane segment spans residues 140–160; the sequence is LCLQLVGFSFVSGFTISMIKV. Residues 161 to 196 lie on the Extracellular side of the membrane; that stretch reads CFISSVTFCGSNVLNHFFCDISPILKLACTDFSTAE. Residues 197-217 traverse the membrane as a helical segment; the sequence is LVDFILAFIILVFPLLATILS. Residues 218-237 are Cytoplasmic-facing; it reads YWHITLAVLRIPSATGCWRA. Residues 238–258 traverse the membrane as a helical segment; sequence FSTCASHLTVVTVFYTALLFM. The Extracellular segment spans residues 259–271; the sequence is YVRPQAIDSQSSN. Residues 272–292 traverse the membrane as a helical segment; sequence KLISAVYTVVTPIINPLIYCL. The Cytoplasmic segment spans residues 293 to 312; that stretch reads RNKEFKDALKKALGLGQTSH.

The protein belongs to the G-protein coupled receptor 1 family.

The protein resides in the cell membrane. Odorant receptor. The protein is Olfactory receptor 6B2 (OR6B2) of Homo sapiens (Human).